The following is a 62-amino-acid chain: Short neurotoxin 3 (62 aa).

4 cysteine pairs are disulfide-bonded: Cys3/Cys24, Cys17/Cys41, Cys43/Cys54, and Cys55/Cys60.

The protein belongs to the three-finger toxin family. Short-chain subfamily. Type I alpha-neurotoxin sub-subfamily. As to expression, expressed by the venom gland.

It localises to the secreted. Functionally, binds to muscle nicotinic acetylcholine receptor (nAChR) and inhibit acetylcholine from binding to the receptor, thereby impairing neuromuscular transmission. The sequence is that of Short neurotoxin 3 from Naja mossambica (Mozambique spitting cobra).